We begin with the raw amino-acid sequence, 136 residues long: MARTKQTARKSTGGKAPRKQLATKAARKSAPTTGGVKKPHRYRPGTVALREIRRYQKSTELLIRKLPFQRLVREIAQDFKTDLRFQSAAIGALQEASEAYLVGLFEDTNLCAIHAKRVTIMPKDMQLARRIRGERA.

Residues 1–43 (MARTKQTARKSTGGKAPRKQLATKAARKSAPTTGGVKKPHRYR) form a disordered region. N6,N6,N6-trimethyllysine; alternate is present on residues lysine 5 and lysine 10. N6,N6-dimethyllysine; alternate occurs at positions 5 and 10. 2 positions are modified to N6-acetyllysine; alternate: lysine 5 and lysine 10. At lysine 5 the chain carries N6-methyllysine; alternate. Serine 11 is modified (phosphoserine). Lysine 15 and lysine 24 each carry N6-acetyllysine. Residue lysine 28 is modified to N6,N6,N6-trimethyllysine; alternate. An N6,N6-dimethyllysine; alternate modification is found at lysine 28. At lysine 28 the chain carries N6-methyllysine; alternate. Phosphoserine is present on serine 29. At lysine 37 the chain carries N6,N6,N6-trimethyllysine; alternate. At lysine 37 the chain carries N6-methyllysine; alternate. Residue lysine 80 is modified to N6-methyllysine.

This sequence belongs to the histone H3 family. In terms of assembly, the nucleosome is a histone octamer containing two molecules each of H2A, H2B, H3 and H4 assembled in one H3-H4 heterotetramer and two H2A-H2B heterodimers. The octamer wraps approximately 147 bp of DNA. Post-translationally, acetylation is generally linked to gene activation. In terms of processing, methylation at Lys-5 is linked to gene activation. Methylation at Lys-10 is linked to gene repression. Highly expressed in nearly all larval and adult nuclei. Expressed only at low levels in intestine. Expressed throughout all stages of gametogenesis.

It is found in the nucleus. It localises to the chromosome. In terms of biological role, variant histone H3 which replaces conventional H3 in a wide range of nucleosomes in active genes. Constitutes the predominant form of histone H3 in non-dividing cells and is incorporated into chromatin independently of DNA synthesis. Deposited at sites of nucleosomal displacement throughout transcribed genes, suggesting that it represents an epigenetic imprint of transcriptionally active chromatin. Nucleosomes wrap and compact DNA into chromatin, limiting DNA accessibility to the cellular machineries which require DNA as a template. Histones thereby play a central role in transcription regulation, DNA repair, DNA replication and chromosomal stability. DNA accessibility is regulated via a complex set of post-translational modifications of histones, also called histone code, and nucleosome remodeling. The polypeptide is Histone H3.3 type 2 (his-72) (Caenorhabditis elegans).